A 117-amino-acid polypeptide reads, in one-letter code: Large ribosomal subunit protein uL18 (117 aa).

This sequence belongs to the universal ribosomal protein uL18 family. In terms of assembly, part of the 50S ribosomal subunit; part of the 5S rRNA/L5/L18/L25 subcomplex. Contacts the 5S and 23S rRNAs.

Its function is as follows. This is one of the proteins that bind and probably mediate the attachment of the 5S RNA into the large ribosomal subunit, where it forms part of the central protuberance. In Coxiella burnetii (strain CbuK_Q154) (Coxiella burnetii (strain Q154)), this protein is Large ribosomal subunit protein uL18.